The chain runs to 521 residues: Exodeoxyribonuclease 7 large subunit (521 aa).

Residues 494–521 (ATSGAARPKPAAKPSTKAKEPGNQGSLF) form a disordered region. The span at 498–508 (AARPKPAAKPS) shows a compositional bias: low complexity.

The protein belongs to the XseA family. In terms of assembly, heterooligomer composed of large and small subunits.

It localises to the cytoplasm. The catalysed reaction is Exonucleolytic cleavage in either 5'- to 3'- or 3'- to 5'-direction to yield nucleoside 5'-phosphates.. Functionally, bidirectionally degrades single-stranded DNA into large acid-insoluble oligonucleotides, which are then degraded further into small acid-soluble oligonucleotides. This is Exodeoxyribonuclease 7 large subunit from Mesorhizobium japonicum (strain LMG 29417 / CECT 9101 / MAFF 303099) (Mesorhizobium loti (strain MAFF 303099)).